Reading from the N-terminus, the 405-residue chain is Serpin H1 (405 aa).

The signal sequence occupies residues 1 to 15 (MQIFLVLALCGLAAA). N-linked (GlcNAc...) asparagine glycosylation is found at N107 and N112. Residues 402–405 (RDEL) carry the Prevents secretion from ER motif.

It belongs to the serpin family.

It localises to the endoplasmic reticulum lumen. In terms of biological role, binds specifically to collagen. Could be involved as a chaperone in the biosynthetic pathway of collagen. The polypeptide is Serpin H1 (SERPINH1) (Gallus gallus (Chicken)).